A 423-amino-acid polypeptide reads, in one-letter code: Adenylosuccinate synthetase (423 aa).

GTP is bound by residues 11–17 (GDEGKGK) and 39–41 (GHT). Aspartate 12 serves as the catalytic Proton acceptor. Positions 12 and 39 each coordinate Mg(2+). IMP contacts are provided by residues 12-15 (DEGK), 37-40 (NAGH), threonine 129, arginine 143, asparagine 219, threonine 234, and arginine 298. The active-site Proton donor is the histidine 40. 294–300 (VTTGRRR) lines the substrate pocket. GTP contacts are provided by residues arginine 300, 326-328 (KLD), and 411-413 (GTG).

This sequence belongs to the adenylosuccinate synthetase family. Homodimer. It depends on Mg(2+) as a cofactor.

It is found in the cytoplasm. It carries out the reaction IMP + L-aspartate + GTP = N(6)-(1,2-dicarboxyethyl)-AMP + GDP + phosphate + 2 H(+). The protein operates within purine metabolism; AMP biosynthesis via de novo pathway; AMP from IMP: step 1/2. Plays an important role in the de novo pathway and in the salvage pathway of purine nucleotide biosynthesis. Catalyzes the first committed step in the biosynthesis of AMP from IMP. This Penicillium rubens (strain ATCC 28089 / DSM 1075 / NRRL 1951 / Wisconsin 54-1255) (Penicillium chrysogenum) protein is Adenylosuccinate synthetase.